The following is a 239-amino-acid chain: tRNA (guanine-N(7)-)-methyltransferase (239 aa).

Residues 1-13 (MEAEVQQGQQSPE) show a composition bias toward polar residues. A disordered region spans residues 1–30 (MEAEVQQGQQSPEGQLEKRPPSPPWAGIPL). The S-adenosyl-L-methionine site is built by D72, E97, N124, and D147. The active site involves D147. The substrate site is built by K151 and D183.

The protein belongs to the class I-like SAM-binding methyltransferase superfamily. TrmB family.

It catalyses the reaction guanosine(46) in tRNA + S-adenosyl-L-methionine = N(7)-methylguanosine(46) in tRNA + S-adenosyl-L-homocysteine. It participates in tRNA modification; N(7)-methylguanine-tRNA biosynthesis. Catalyzes the formation of N(7)-methylguanine at position 46 (m7G46) in tRNA. This Synechococcus sp. (strain JA-2-3B'a(2-13)) (Cyanobacteria bacterium Yellowstone B-Prime) protein is tRNA (guanine-N(7)-)-methyltransferase.